A 266-amino-acid polypeptide reads, in one-letter code: Protein-ADP-ribose hydrolase (266 aa).

A Macro domain is found at 74–265 (TDLKDLKPIK…LYKEAFNRDA (192 aa)). The ADP-D-ribose site is built by Asp-93, Ile-94, and Asn-107. Residues Cys-113, His-118, and Cys-120 each coordinate Zn(2+). Positions 120, 121, 122, 212, 213, 214, and 216 each coordinate ADP-D-ribose.

It belongs to the MacroD-type family. Zn-Macro subfamily. It depends on Zn(2+) as a cofactor.

The catalysed reaction is 4-O-(ADP-D-ribosyl)-L-aspartyl-[protein] + H2O = L-aspartyl-[protein] + ADP-D-ribose + H(+). ADP-ribosylhydrolase that specifically reverses the SirTM-mediated mono-ADP-ribosylation at an asparatate residue of GcvH-L, by releasing ADP-ribose from the target protein. May play a role in the regulation of the response to host-induced oxidative stress. This is Protein-ADP-ribose hydrolase from Staphylococcus aureus (strain COL).